Reading from the N-terminus, the 1045-residue chain is Probable beta-glucosidase E (1045 aa).

The interval 1–74 is disordered; that stretch reads MAPPDSTHGG…SGSYQLRPVD (74 aa). At 1-163 the chain is on the cytoplasmic side; it reads MAPPDSTHGG…PVKYARIWWR (163 aa). The segment covering 11–20 has biased composition (basic and acidic residues); sequence SFRDHLKTND. Residues 164–184 form a helical; Signal-anchor for type II membrane protein membrane-spanning segment; that stretch reads TLLAVIVTLAVVVWGFLSFAV. The Extracellular portion of the chain corresponds to 185-1045; that stretch reads SHREEPKVWP…SRDLPLMGEY (861 aa). Asn-226, Asn-234, and Asn-402 each carry an N-linked (GlcNAc...) asparagine glycan. Asp-430 is an active-site residue. Residues Asn-473, Asn-512, Asn-577, Asn-893, Asn-902, and Asn-988 are each glycosylated (N-linked (GlcNAc...) asparagine).

It belongs to the glycosyl hydrolase 3 family.

Its subcellular location is the cell membrane. The enzyme catalyses Hydrolysis of terminal, non-reducing beta-D-glucosyl residues with release of beta-D-glucose.. The protein operates within glycan metabolism; cellulose degradation. Its function is as follows. Beta-glucosidases are one of a number of cellulolytic enzymes involved in the degradation of cellulosic biomass. Catalyzes the last step releasing glucose from the inhibitory cellobiose. This chain is Probable beta-glucosidase E (bglE), found in Neosartorya fischeri (strain ATCC 1020 / DSM 3700 / CBS 544.65 / FGSC A1164 / JCM 1740 / NRRL 181 / WB 181) (Aspergillus fischerianus).